Consider the following 172-residue polypeptide: Large ribosomal subunit protein uL10 (172 aa).

The protein belongs to the universal ribosomal protein uL10 family. Part of the ribosomal stalk of the 50S ribosomal subunit. The N-terminus interacts with L11 and the large rRNA to form the base of the stalk. The C-terminus forms an elongated spine to which L12 dimers bind in a sequential fashion forming a multimeric L10(L12)X complex.

In terms of biological role, forms part of the ribosomal stalk, playing a central role in the interaction of the ribosome with GTP-bound translation factors. This is Large ribosomal subunit protein uL10 from Bradyrhizobium sp. (strain ORS 278).